The sequence spans 228 residues: General odorant-binding protein 71 (228 aa).

Positions 1–20 (MCGAIVLLLLVGTSPAPVEG) are cleaved as a signal peptide. Residues 50–131 (TMGEWGQRDR…GNSSSSSSST (82 aa)) are disordered. A compositionally biased stretch (basic and acidic residues) spans 55 to 72 (GQRDRNGEEQQMMRDYGR). Residues 83–99 (GGQTSGSSSSGSAGEHS) are compositionally biased toward low complexity. The segment covering 111–120 (AGQGGNGTRS) has biased composition (gly residues). The segment covering 121 to 131 (GGNSSSSSSST) has biased composition (low complexity). 2 disulfide bridges follow: cysteine 138/cysteine 199 and cysteine 185/cysteine 208.

It belongs to the PBP/GOBP family.

The protein resides in the secreted. Present in the aqueous fluid surrounding olfactory sensory dendrites and are thought to aid in the capture and transport of hydrophobic odorants into and through this fluid. This is General odorant-binding protein 71 (Obp71) from Anopheles gambiae (African malaria mosquito).